Consider the following 290-residue polypeptide: Acetylglutamate kinase (290 aa).

Substrate is bound by residues Gly-60 to Gly-61, Arg-82, and Asn-187.

Belongs to the acetylglutamate kinase family. ArgB subfamily.

It is found in the cytoplasm. It catalyses the reaction N-acetyl-L-glutamate + ATP = N-acetyl-L-glutamyl 5-phosphate + ADP. Its pathway is amino-acid biosynthesis; L-arginine biosynthesis; N(2)-acetyl-L-ornithine from L-glutamate: step 2/4. Catalyzes the ATP-dependent phosphorylation of N-acetyl-L-glutamate. This is Acetylglutamate kinase from Marinobacter nauticus (strain ATCC 700491 / DSM 11845 / VT8) (Marinobacter aquaeolei).